Consider the following 699-residue polypeptide: D-(-)-3-hydroxybutyrate oligomer hydrolase (699 aa).

Residues 1-19 (MNPSLCIAVAFACPLSALA) form the signal peptide. Residue serine 303 is the Charge relay system of the active site.

It belongs to the D-(-)-3-hydroxybutyrate oligomer hydrolase family.

Its subcellular location is the secreted. The enzyme catalyses (3R)-hydroxybutanoate dimer + H2O = 2 (R)-3-hydroxybutanoate + H(+). It functions in the pathway lipid metabolism; butanoate metabolism. Participates in the degradation of poly-3-hydroxybutyrate (PHB). It works downstream of poly(3-hydroxybutyrate) depolymerase, hydrolyzing D(-)-3-hydroxybutyrate oligomers of various length (3HB-oligomers) into 3HB-monomers. The protein is D-(-)-3-hydroxybutyrate oligomer hydrolase of Azoarcus sp. (strain BH72).